The primary structure comprises 187 residues: Thioredoxin F, chloroplastic (187 aa).

Residues M1–E72 constitute a chloroplast transit peptide. The region spanning A73–S186 is the Thioredoxin domain. Residues C111 and C114 each act as nucleophile in the active site. A disulfide bridge links C111 with C114.

This sequence belongs to the thioredoxin family. Plant F-type subfamily.

Its subcellular location is the plastid. The protein localises to the chloroplast. Thiol-disulfide oxidoreductase involved in the redox regulation of enzymes of both reductive pentose phosphate pathway (Calvin-Benson cycle) and oxidative pentose phosphate pathway. The sequence is that of Thioredoxin F, chloroplastic from Oryza sativa subsp. japonica (Rice).